Here is a 190-residue protein sequence, read N- to C-terminus: Threonylcarbamoyl-AMP synthase (190 aa).

The 184-residue stretch at 7–190 (GDAIAAAIDV…ALTGELFRQG (184 aa)) folds into the YrdC-like domain.

The protein belongs to the SUA5 family. TsaC subfamily.

The protein resides in the cytoplasm. It catalyses the reaction L-threonine + hydrogencarbonate + ATP = L-threonylcarbamoyladenylate + diphosphate + H2O. Required for the formation of a threonylcarbamoyl group on adenosine at position 37 (t(6)A37) in tRNAs that read codons beginning with adenine. Catalyzes the conversion of L-threonine, HCO(3)(-)/CO(2) and ATP to give threonylcarbamoyl-AMP (TC-AMP) as the acyladenylate intermediate, with the release of diphosphate. This Shigella flexneri protein is Threonylcarbamoyl-AMP synthase.